Consider the following 274-residue polypeptide: CDC48-associated ubiquitin-like/zinc finger protein 1 (274 aa).

The segment at 12–58 (LDVGKHCAYCRQLDFLPFHCSFCNEDFCSNHRLKEDHHCRWLLEHEE) adopts an AN1-type zinc-finger fold. Zn(2+) is bound by residues C18, C21, C31, C34, C39, H42, H48, and C50. The tract at residues 170–266 (NRIYIWCYLV…KDLDTLYLVH (97 aa)) is ubiquitin-like. S273 bears the Phosphoserine mark.

As to quaternary structure, interacts (via its ubiquitin-like domain) with CDC48 (via N-terminus). Associates with the 26S proteasome. Specifically interacts with the regulatory particle (RP) subunit RPN2. Exposure to arsenite, a known inducer of protein misfolding resulting in accumulation of polyubiquitinated conjugates, enhances the association with the proteoasome. Binds to ubiquitinated proteins conjugated to a 4 or more molecule ubiquitin chain. Binding to ubiquitinated proteins is zinc-dependent.

It is found in the cytoplasm. The protein localises to the nucleus. In terms of biological role, promotes efficient arsenite-induced clearance of stress granules (SGs). May have a role in the ubiquitin-proteasome system (UPS) protecting cells from metalloid-induced proteotoxicity. The sequence is that of CDC48-associated ubiquitin-like/zinc finger protein 1 from Saccharomyces cerevisiae (strain ATCC 204508 / S288c) (Baker's yeast).